The sequence spans 194 residues: Leucyl/phenylalanyl-tRNA--protein transferase (194 aa).

Belongs to the L/F-transferase family.

Its subcellular location is the cytoplasm. The enzyme catalyses N-terminal L-lysyl-[protein] + L-leucyl-tRNA(Leu) = N-terminal L-leucyl-L-lysyl-[protein] + tRNA(Leu) + H(+). The catalysed reaction is N-terminal L-arginyl-[protein] + L-leucyl-tRNA(Leu) = N-terminal L-leucyl-L-arginyl-[protein] + tRNA(Leu) + H(+). It catalyses the reaction L-phenylalanyl-tRNA(Phe) + an N-terminal L-alpha-aminoacyl-[protein] = an N-terminal L-phenylalanyl-L-alpha-aminoacyl-[protein] + tRNA(Phe). Functionally, functions in the N-end rule pathway of protein degradation where it conjugates Leu, Phe and, less efficiently, Met from aminoacyl-tRNAs to the N-termini of proteins containing an N-terminal arginine or lysine. The chain is Leucyl/phenylalanyl-tRNA--protein transferase from Chlorobaculum tepidum (strain ATCC 49652 / DSM 12025 / NBRC 103806 / TLS) (Chlorobium tepidum).